The chain runs to 342 residues: Holliday junction branch migration complex subunit RuvB (342 aa).

Positions 1–179 (MTNILSPEKS…FGIPMRLNFY (179 aa)) are large ATPase domain (RuvB-L). ATP-binding positions include Ile-18, Arg-19, Gly-60, Lys-63, Thr-64, Thr-65, 126 to 128 (EDF), Arg-169, Tyr-179, and Arg-216. Thr-64 is a Mg(2+) binding site. Residues 180-250 (NTEELKQVLN…ICDFGLKRLT (71 aa)) are small ATPAse domain (RuvB-S). A head domain (RuvB-H) region spans residues 253-342 (SIGLDSNDYR…NQLNILNENE (90 aa)). 3 residues coordinate DNA: Arg-289, Arg-308, and Arg-313.

The protein belongs to the RuvB family. As to quaternary structure, homohexamer. Forms an RuvA(8)-RuvB(12)-Holliday junction (HJ) complex. HJ DNA is sandwiched between 2 RuvA tetramers; dsDNA enters through RuvA and exits via RuvB. An RuvB hexamer assembles on each DNA strand where it exits the tetramer. Each RuvB hexamer is contacted by two RuvA subunits (via domain III) on 2 adjacent RuvB subunits; this complex drives branch migration. In the full resolvosome a probable DNA-RuvA(4)-RuvB(12)-RuvC(2) complex forms which resolves the HJ.

It localises to the cytoplasm. It carries out the reaction ATP + H2O = ADP + phosphate + H(+). Participates in UV-tolerance of Synechocystis PCC 6803. Its function is as follows. The RuvA-RuvB-RuvC complex processes Holliday junction (HJ) DNA during genetic recombination and DNA repair, while the RuvA-RuvB complex plays an important role in the rescue of blocked DNA replication forks via replication fork reversal (RFR). RuvA specifically binds to HJ cruciform DNA, conferring on it an open structure. The RuvB hexamer acts as an ATP-dependent pump, pulling dsDNA into and through the RuvAB complex. RuvB forms 2 homohexamers on either side of HJ DNA bound by 1 or 2 RuvA tetramers; 4 subunits per hexamer contact DNA at a time. Coordinated motions by a converter formed by DNA-disengaged RuvB subunits stimulates ATP hydrolysis and nucleotide exchange. Immobilization of the converter enables RuvB to convert the ATP-contained energy into a lever motion, pulling 2 nucleotides of DNA out of the RuvA tetramer per ATP hydrolyzed, thus driving DNA branch migration. The RuvB motors rotate together with the DNA substrate, which together with the progressing nucleotide cycle form the mechanistic basis for DNA recombination by continuous HJ branch migration. Branch migration allows RuvC to scan DNA until it finds its consensus sequence, where it cleaves and resolves cruciform DNA. The chain is Holliday junction branch migration complex subunit RuvB from Rickettsia prowazekii (strain Madrid E).